The sequence spans 534 residues: CTP synthase (534 aa).

Positions 1-267 (MSKYIVVTGG…GSYILNRLNI (267 aa)) are amidoligase domain. Ser13 lines the CTP pocket. UTP is bound at residue Ser13. 14-19 (SIGKGI) is a binding site for ATP. Tyr54 is a binding site for L-glutamine. Asp71 is a binding site for ATP. Residues Asp71 and Glu141 each coordinate Mg(2+). CTP is bound by residues 148–150 (DIE), 188–193 (KTKPTQ), and Lys224. Residues 188–193 (KTKPTQ) and Lys224 each bind UTP. Residues 294–532 (KIAVVGKYIE…IKAAKNKKQN (239 aa)) form the Glutamine amidotransferase type-1 domain. Gly353 contacts L-glutamine. Cys380 serves as the catalytic Nucleophile; for glutamine hydrolysis. L-glutamine is bound by residues 381–384 (LGLH), Glu403, and Arg460. Residues His505 and Glu507 contribute to the active site.

This sequence belongs to the CTP synthase family. Homotetramer.

The enzyme catalyses UTP + L-glutamine + ATP + H2O = CTP + L-glutamate + ADP + phosphate + 2 H(+). It carries out the reaction L-glutamine + H2O = L-glutamate + NH4(+). The catalysed reaction is UTP + NH4(+) + ATP = CTP + ADP + phosphate + 2 H(+). It participates in pyrimidine metabolism; CTP biosynthesis via de novo pathway; CTP from UDP: step 2/2. Its activity is regulated as follows. Allosterically activated by GTP, when glutamine is the substrate; GTP has no effect on the reaction when ammonia is the substrate. The allosteric effector GTP functions by stabilizing the protein conformation that binds the tetrahedral intermediate(s) formed during glutamine hydrolysis. Inhibited by the product CTP, via allosteric rather than competitive inhibition. Functionally, catalyzes the ATP-dependent amination of UTP to CTP with either L-glutamine or ammonia as the source of nitrogen. Regulates intracellular CTP levels through interactions with the four ribonucleotide triphosphates. The protein is CTP synthase of Methanosphaera stadtmanae (strain ATCC 43021 / DSM 3091 / JCM 11832 / MCB-3).